Reading from the N-terminus, the 137-residue chain is S-protein homolog 16 (137 aa).

Residues 1–21 (MKNLLVFIFVFSLCMFDHVSG) form the signal peptide. Asparagine 87 carries an N-linked (GlcNAc...) asparagine glycan.

This sequence belongs to the plant self-incompatibility (S1) protein family.

It is found in the secreted. This is S-protein homolog 16 from Arabidopsis thaliana (Mouse-ear cress).